Here is a 1179-residue protein sequence, read N- to C-terminus: Protein FAM83H (1179 aa).

Positions 1–286 are DUF1669; the sequence is MARRSQSSSQ…LFAQSEPLVP (286 aa). A mediates interaction with CSNK1A1 and is required for FAM83H activity in keratin cytoskeleton organization region spans residues 1 to 286; that stretch reads MARRSQSSSQ…LFAQSEPLVP (286 aa). Thr465 carries the post-translational modification Phosphothreonine. 2 disordered regions span residues 484-577 and 636-669; these read ADPD…GRAG and FPTKVPVPGPGSGGNGPEREGPEEPGLAKQDSFR. 6 positions are modified to phosphoserine: Ser513, Ser514, Ser516, Ser523, Ser647, and Ser667. Position 756 is a phosphothreonine (Thr756). 3 positions are modified to phosphoserine: Ser759, Ser785, and Ser813. Positions 830–1026 are disordered; sequence RLPSRFLSAQ…RGPRARLSSA (197 aa). Residues 836-847 are compositionally biased toward polar residues; that stretch reads LSAQSHSTSPQG. Residues Ser870 and Ser881 each carry the phosphoserine modification. Thr883 carries the post-translational modification Phosphothreonine. The segment covering 884-906 has biased composition (polar residues); that stretch reads PGFSTRRGSPTTGFIEQKGSPTS. Ser892 carries the phosphoserine modification. Thr894 bears the Phosphothreonine mark. A phosphoserine mark is found at Ser903, Ser914, Ser925, Ser936, Ser945, Ser1003, Ser1009, Ser1024, and Ser1025. Position 1040 is a phosphothreonine (Thr1040). Disordered stretches follow at residues 1047–1084 and 1143–1165; these read ISAHGQKHRAVPAPSPGPTHNSPELGRPPAAGVLAPDM and EEASSPGAGEGPAEEGTRDSKVG. Residues Ser1048, Ser1068, and Ser1147 each carry the phosphoserine modification.

It belongs to the FAM83 family. Directly interacts (via DUF1669) with casein kinase isoforms CSNK1A1, CSNK1A1L, CSNK1D and CSNK1E. Interaction with CSNK1A1 recruits CSNK1A1 to keratin filaments. Interacts with KRT18 and probably other keratins. Expressed in the tooth follicle.

It localises to the cytoplasm. The protein resides in the cytoskeleton. In terms of biological role, may play a major role in the structural organization and calcification of developing enamel. May play a role in keratin cytoskeleton disassembly by recruiting CSNK1A1 to keratin filaments. Thereby, it may regulate epithelial cell migration. The sequence is that of Protein FAM83H from Homo sapiens (Human).